Consider the following 760-residue polypeptide: Xaa-Pro dipeptidyl-peptidase (760 aa).

Active-site charge relay system residues include S349, D469, and H499.

This sequence belongs to the peptidase S15 family. As to quaternary structure, homodimer.

It localises to the cytoplasm. The enzyme catalyses Hydrolyzes Xaa-Pro-|- bonds to release unblocked, N-terminal dipeptides from substrates including Ala-Pro-|-p-nitroanilide and (sequentially) Tyr-Pro-|-Phe-Pro-|-Gly-Pro-|-Ile.. Its function is as follows. Removes N-terminal dipeptides sequentially from polypeptides having unsubstituted N-termini provided that the penultimate residue is proline. The polypeptide is Xaa-Pro dipeptidyl-peptidase (Streptococcus pyogenes serotype M2 (strain MGAS10270)).